A 142-amino-acid chain; its full sequence is Protein archease (142 aa).

Aspartate 12, aspartate 141, and isoleucine 142 together coordinate Ca(2+).

Belongs to the archease family.

Functionally, activates the tRNA-splicing ligase complex by facilitating the enzymatic turnover of catalytic subunit RtcB. Acts by promoting the guanylylation of RtcB, a key intermediate step in tRNA ligation. Can also alter the NTP specificity of RtcB such that ATP, dGTP or ITP is used efficiently. The protein is Protein archease of Pyrococcus furiosus (strain ATCC 43587 / DSM 3638 / JCM 8422 / Vc1).